A 469-amino-acid polypeptide reads, in one-letter code: Trigger factor (469 aa).

The PPIase FKBP-type domain occupies 162–243 (GDFVSIDLSA…VKSVKERELP (82 aa)). A disordered region spans residues 438-469 (GPSGEQAAEDSAEESTDAAEGEAAEDADDTDK). Acidic residues predominate over residues 444–469 (AAEDSAEESTDAAEGEAAEDADDTDK).

Belongs to the FKBP-type PPIase family. Tig subfamily.

The protein localises to the cytoplasm. The catalysed reaction is [protein]-peptidylproline (omega=180) = [protein]-peptidylproline (omega=0). In terms of biological role, involved in protein export. Acts as a chaperone by maintaining the newly synthesized protein in an open conformation. Functions as a peptidyl-prolyl cis-trans isomerase. The protein is Trigger factor of Mycolicibacterium smegmatis (strain ATCC 700084 / mc(2)155) (Mycobacterium smegmatis).